The sequence spans 442 residues: Myb family transcription factor PHL13 (442 aa).

Positions 235–295 (MTSKQRMRWT…HLQKYRTARY (61 aa)) constitute an HTH myb-type domain. Positions 266–291 (PKAVLKLINSPGLTVYHVKSHLQKYR) form a DNA-binding region, H-T-H motif. Residues 329–349 (TEALRLQMKVQKQLHEQLEIQ) are coiled coil. The LHEQLE motif lies at 342 to 347 (LHEQLE). Residues 370–380 (QQKMQENKKDS) show a composition bias toward basic and acidic residues. Residues 370–442 (QQKMQENKKD…TSNRKRVRED (73 aa)) are disordered. Over residues 395-434 (SPNLSQPFLHKATNSEPSITQKLQNGSSTMDQSESTSGTS) the composition is skewed to polar residues.

The protein belongs to the MYB-CC family.

The protein localises to the nucleus. The sequence is that of Myb family transcription factor PHL13 from Arabidopsis thaliana (Mouse-ear cress).